A 113-amino-acid polypeptide reads, in one-letter code: Nucleoid-associated protein Csac_1593 (113 aa).

This sequence belongs to the YbaB/EbfC family. Homodimer.

The protein localises to the cytoplasm. The protein resides in the nucleoid. Binds to DNA and alters its conformation. May be involved in regulation of gene expression, nucleoid organization and DNA protection. The polypeptide is Nucleoid-associated protein Csac_1593 (Caldicellulosiruptor saccharolyticus (strain ATCC 43494 / DSM 8903 / Tp8T 6331)).